A 127-amino-acid polypeptide reads, in one-letter code: Large-conductance mechanosensitive channel (127 aa).

Helical transmembrane passes span 9–29, 32–52, and 75–95; these read EFAM…GVAF, IVTA…LGGV, and VIDF…INLL.

Belongs to the MscL family. Homopentamer.

It is found in the cell inner membrane. Channel that opens in response to stretch forces in the membrane lipid bilayer. May participate in the regulation of osmotic pressure changes within the cell. This chain is Large-conductance mechanosensitive channel, found in Legionella pneumophila (strain Corby).